The following is a 1004-amino-acid chain: Translation initiation factor IF-2 (1004 aa).

Positions 36-393 are disordered; that stretch reads SSTIEPPVVK…RQKRNEYESM (358 aa). Low complexity-rich tracts occupy residues 62-157 and 173-183; these read AAKP…AKPA and AAKPGAEAPRP. Pro residues-rich tracts occupy residues 184-196 and 219-236; these read GGMP…PAPK and PRPG…PGGG. Composition is skewed to gly residues over residues 237–249 and 261–277; these read PRPQ…GGQR and GNRG…GPRP. The span at 279-303 shows a compositional bias: low complexity; sequence GGPRPQGGSRPQGGSAQGAQGAPSQ. A compositionally biased stretch (gly residues) spans 330–373; it reads GKGGRGGQAGGGAGGGFNRGGGTGGGAGRGGRRGGTAGAFGRPG. Over residues 377 to 386 the composition is skewed to basic residues; it reads RRGRKSKRQK. The tr-type G domain occupies 499 to 671; the sequence is KRPPVVTVMG…VCLTADAELD (173 aa). The interval 508-515 is G1; it reads GHVDHGKT. A GTP-binding site is contributed by 508–515; the sequence is GHVDHGKT. Residues 533–537 are G2; the sequence is GITQG. Positions 558 to 561 are G3; that stretch reads DTPG. Residues 558 to 562 and 612 to 615 contribute to the GTP site; these read DTPGH and NKID. A G4 region spans residues 612 to 615; that stretch reads NKID. A G5 region spans residues 648–650; it reads SAK.

Belongs to the TRAFAC class translation factor GTPase superfamily. Classic translation factor GTPase family. IF-2 subfamily.

Its subcellular location is the cytoplasm. One of the essential components for the initiation of protein synthesis. Protects formylmethionyl-tRNA from spontaneous hydrolysis and promotes its binding to the 30S ribosomal subunits. Also involved in the hydrolysis of GTP during the formation of the 70S ribosomal complex. This is Translation initiation factor IF-2 from Corynebacterium glutamicum (strain ATCC 13032 / DSM 20300 / JCM 1318 / BCRC 11384 / CCUG 27702 / LMG 3730 / NBRC 12168 / NCIMB 10025 / NRRL B-2784 / 534).